Reading from the N-terminus, the 320-residue chain is Phosphate acetyltransferase (320 aa).

This sequence belongs to the phosphate acetyltransferase and butyryltransferase family.

The protein resides in the cytoplasm. It carries out the reaction acetyl-CoA + phosphate = acetyl phosphate + CoA. The protein operates within metabolic intermediate biosynthesis; acetyl-CoA biosynthesis; acetyl-CoA from acetate: step 2/2. The chain is Phosphate acetyltransferase (pta) from Mycoplasma genitalium (strain ATCC 33530 / DSM 19775 / NCTC 10195 / G37) (Mycoplasmoides genitalium).